The following is a 302-amino-acid chain: Oxygen-dependent coproporphyrinogen-III oxidase (302 aa).

Ser94 lines the substrate pocket. Positions 98 and 108 each coordinate a divalent metal cation. The Proton donor role is filled by His108. 110–112 lines the substrate pocket; the sequence is NVR. A divalent metal cation contacts are provided by His147 and His177. Residues 242–277 form an important for dimerization region; that stretch reads YVEFNLVWDRGTLFGLQSGGRTESILMSMPPLVRWE. Residue 260 to 262 coordinates substrate; that stretch reads GGR.

It belongs to the aerobic coproporphyrinogen-III oxidase family. In terms of assembly, homodimer. Requires a divalent metal cation as cofactor.

The protein resides in the cytoplasm. The catalysed reaction is coproporphyrinogen III + O2 + 2 H(+) = protoporphyrinogen IX + 2 CO2 + 2 H2O. Its pathway is porphyrin-containing compound metabolism; protoporphyrin-IX biosynthesis; protoporphyrinogen-IX from coproporphyrinogen-III (O2 route): step 1/1. Its function is as follows. Involved in the heme biosynthesis. Catalyzes the aerobic oxidative decarboxylation of propionate groups of rings A and B of coproporphyrinogen-III to yield the vinyl groups in protoporphyrinogen-IX. The chain is Oxygen-dependent coproporphyrinogen-III oxidase from Chromobacterium violaceum (strain ATCC 12472 / DSM 30191 / JCM 1249 / CCUG 213 / NBRC 12614 / NCIMB 9131 / NCTC 9757 / MK).